Here is a 215-residue protein sequence, read N- to C-terminus: L-fuculose phosphate aldolase (215 aa).

Substrate-binding positions include 28-29 (GN), 43-44 (TG), and 71-72 (SS). The active-site Proton donor/acceptor is the Glu73. Zn(2+)-binding residues include Glu73, His92, His94, and His155.

Belongs to the aldolase class II family. AraD/FucA subfamily. In terms of assembly, homotetramer. The cofactor is Zn(2+).

It catalyses the reaction L-fuculose 1-phosphate = (S)-lactaldehyde + dihydroxyacetone phosphate. It participates in carbohydrate degradation; L-fucose degradation; L-lactaldehyde and glycerone phosphate from L-fucose: step 3/3. Involved in the degradation of L-fucose and D-arabinose. Catalyzes the reversible cleavage of L-fuculose 1-phosphate (Fuc1P) to yield dihydroxyacetone phosphate (DHAP) and L-lactaldehyde. The chain is L-fuculose phosphate aldolase from Escherichia coli O6:H1 (strain CFT073 / ATCC 700928 / UPEC).